Consider the following 126-residue polypeptide: Glycine cleavage system H protein (126 aa).

One can recognise a Lipoyl-binding domain in the interval 22–104; sequence TVTIGVTDFA…YGEGWMIKIK (83 aa). Lys63 is modified (N6-lipoyllysine).

Belongs to the GcvH family. As to quaternary structure, the glycine cleavage system is composed of four proteins: P, T, L and H. It depends on (R)-lipoate as a cofactor.

Its function is as follows. The glycine cleavage system catalyzes the degradation of glycine. The H protein shuttles the methylamine group of glycine from the P protein to the T protein. The sequence is that of Glycine cleavage system H protein from Christiangramia forsetii (strain DSM 17595 / CGMCC 1.15422 / KT0803) (Gramella forsetii).